We begin with the raw amino-acid sequence, 89 residues long: Small ribosomal subunit protein uS14 (89 aa).

The protein belongs to the universal ribosomal protein uS14 family. Part of the 30S ribosomal subunit. Contacts proteins S3 and S10.

Its function is as follows. Binds 16S rRNA, required for the assembly of 30S particles and may also be responsible for determining the conformation of the 16S rRNA at the A site. This is Small ribosomal subunit protein uS14 from Leuconostoc mesenteroides subsp. mesenteroides (strain ATCC 8293 / DSM 20343 / BCRC 11652 / CCM 1803 / JCM 6124 / NCDO 523 / NBRC 100496 / NCIMB 8023 / NCTC 12954 / NRRL B-1118 / 37Y).